A 340-amino-acid chain; its full sequence is Putative 2-hydroxyacid dehydrogenase C1773.17c (340 aa).

Residues 169–170 (AI), 249–251 (TAR), and aspartate 275 each bind NAD(+). The active site involves arginine 251. Glutamate 280 is an active-site residue. The Proton donor role is filled by histidine 298. 298–301 (HCGV) is a binding site for NAD(+).

The protein belongs to the D-isomer specific 2-hydroxyacid dehydrogenase family.

This chain is Putative 2-hydroxyacid dehydrogenase C1773.17c, found in Schizosaccharomyces pombe (strain 972 / ATCC 24843) (Fission yeast).